The primary structure comprises 222 residues: MVLRSEILVNKNVMPTAEQALPGRDTPMSLPEFHYVFKDTPLLGPFFEGAIDFAIFGLGCFWGAERRFWQREGVVSTVVGYAGGFTPHPTYEEVCSGLTGHTEVVLVVFDKDKVSYRELLAMFWELHNPTQGMRQGNDIGTQYRSAIYCTSPEQLEQAKASRDAFQAELSKAGFGEITTEIDQAPTVYFAEAYHQQYLAKNPDGYCGIGGTGVCLPPSLQGN.

The active site involves cysteine 60.

It belongs to the MsrA Met sulfoxide reductase family.

It carries out the reaction L-methionyl-[protein] + [thioredoxin]-disulfide + H2O = L-methionyl-(S)-S-oxide-[protein] + [thioredoxin]-dithiol. The catalysed reaction is [thioredoxin]-disulfide + L-methionine + H2O = L-methionine (S)-S-oxide + [thioredoxin]-dithiol. Has an important function as a repair enzyme for proteins that have been inactivated by oxidation. Catalyzes the reversible oxidation-reduction of methionine sulfoxide in proteins to methionine. This Pseudomonas putida (strain ATCC 47054 / DSM 6125 / CFBP 8728 / NCIMB 11950 / KT2440) protein is Peptide methionine sulfoxide reductase MsrA.